The following is a 278-amino-acid chain: Cation-dependent mannose-6-phosphate receptor (278 aa).

An N-terminal signal peptide occupies residues Met-1–Ala-21. At Val-22–Ser-188 the chain is on the lumenal side. The MRH domain occupies Lys-31–Pro-182. A disulfide bond links Cys-33 and Cys-79. Residues Asn-58, Asn-84, Asn-95, Asn-108, and Asn-114 are each glycosylated (N-linked (GlcNAc...) asparagine). Cystine bridges form between Cys-133/Cys-168 and Cys-146/Cys-180. Residues Val-189–Phe-209 form a helical membrane-spanning segment. Residues Leu-210 to Met-278 lie on the Cytoplasmic side of the membrane. Residues Tyr-256 to Met-278 form a disordered region. At Ser-268 the chain carries Phosphoserine.

Homodimer. Binds GGA1, GGA2 and GGA3.

The protein resides in the lysosome membrane. Its function is as follows. Transport of phosphorylated lysosomal enzymes from the Golgi complex and the cell surface to lysosomes. Lysosomal enzymes bearing phosphomannosyl residues bind specifically to mannose-6-phosphate receptors in the Golgi apparatus and the resulting receptor-ligand complex is transported to an acidic prelyosomal compartment where the low pH mediates the dissociation of the complex. This chain is Cation-dependent mannose-6-phosphate receptor (M6pr), found in Rattus norvegicus (Rat).